Here is a 641-residue protein sequence, read N- to C-terminus: Probable licABCH operon regulator (641 aa).

PRD domains lie at 184–289 and 296–403; these read ILPK…TQSQ and SIEE…KKTE. Residues His-219, His-278, His-333, and His-392 each carry the phosphohistidine; by HPr modification. The PTS EIIB type-2 domain maps to 407–498; that stretch reads KRCIIVCASG…ILSDEKEKAN (92 aa). Cys-413 bears the Phosphocysteine; by EIIA mark. A PTS EIIA type-2 domain is found at 499 to 638; sequence RYLKKELVFF…QELSDVFDQK (140 aa). His-559 is subject to Phosphohistidine; by EIIB.

Belongs to the transcriptional antiterminator BglG family.

Its activity is regulated as follows. The regulatory activity of LicR is modulated by phosphorylation and dephosphorylation of the various LicR domains. It becomes activated via phosphoryl group transfer from PEP, EI and HPr on the two conserved histidine residues in the PRD 2 domain, whereas phosphorylation of the EIIA-like domain on His-559 by the PTS EIIB component LicB inactivates LicR. Its function is as follows. Positive regulator of the licABCH operon. The chain is Probable licABCH operon regulator (licR) from Bacillus subtilis (strain 168).